We begin with the raw amino-acid sequence, 253 residues long: Small ribosomal subunit protein uS3 (253 aa).

One can recognise a KH type-2 domain in the interval 21-92 (LNEFLTRELA…SVELYAEKVA (72 aa)). The interval 211-253 (VEPKDEILPTTPISEQKGGKPDPQVPQQPPQQPPAMPPPVPTA) is disordered. Residues 233-253 (PQVPQQPPQQPPAMPPPVPTA) are compositionally biased toward pro residues.

Belongs to the universal ribosomal protein uS3 family.

The protein resides in the cytoplasm. The protein localises to the nucleus. Its subcellular location is the nucleolus. It is found in the mitochondrion inner membrane. It localises to the cytoskeleton. The protein resides in the spindle. It catalyses the reaction 2'-deoxyribonucleotide-(2'-deoxyribose 5'-phosphate)-2'-deoxyribonucleotide-DNA = a 3'-end 2'-deoxyribonucleotide-(2,3-dehydro-2,3-deoxyribose 5'-phosphate)-DNA + a 5'-end 5'-phospho-2'-deoxyribonucleoside-DNA + H(+). Functionally, component of the small ribosomal subunit. The ribosome is a large ribonucleoprotein complex responsible for the synthesis of proteins in the cell. Has endonuclease activity and plays a role in repair of damaged DNA. Also involved in other processes including regulation of transcription, translation of its cognate mRNA, spindle formation and chromosome movement during mitosis, and apoptosis. The polypeptide is Small ribosomal subunit protein uS3 (RPS3) (Ambystoma mexicanum (Axolotl)).